A 362-amino-acid chain; its full sequence is Phosphoserine aminotransferase (362 aa).

L-glutamate contacts are provided by S9 and R42. Residues G76 to R77, W102, T153, D174, and Q197 each bind pyridoxal 5'-phosphate. K198 carries the post-translational modification N6-(pyridoxal phosphate)lysine. N239 to T240 lines the pyridoxal 5'-phosphate pocket.

This sequence belongs to the class-V pyridoxal-phosphate-dependent aminotransferase family. SerC subfamily. As to quaternary structure, homodimer. Requires pyridoxal 5'-phosphate as cofactor.

Its subcellular location is the cytoplasm. The catalysed reaction is O-phospho-L-serine + 2-oxoglutarate = 3-phosphooxypyruvate + L-glutamate. It carries out the reaction 4-(phosphooxy)-L-threonine + 2-oxoglutarate = (R)-3-hydroxy-2-oxo-4-phosphooxybutanoate + L-glutamate. It functions in the pathway amino-acid biosynthesis; L-serine biosynthesis; L-serine from 3-phospho-D-glycerate: step 2/3. The protein operates within cofactor biosynthesis; pyridoxine 5'-phosphate biosynthesis; pyridoxine 5'-phosphate from D-erythrose 4-phosphate: step 3/5. Functionally, catalyzes the reversible conversion of 3-phosphohydroxypyruvate to phosphoserine and of 3-hydroxy-2-oxo-4-phosphonooxybutanoate to phosphohydroxythreonine. This Escherichia coli (strain ATCC 8739 / DSM 1576 / NBRC 3972 / NCIMB 8545 / WDCM 00012 / Crooks) protein is Phosphoserine aminotransferase.